The chain runs to 239 residues: Ribonuclease PH (239 aa).

Residues Arg-86 and 124 to 126 contribute to the phosphate site; that span reads GTR.

Belongs to the RNase PH family. Homohexameric ring arranged as a trimer of dimers.

The catalysed reaction is tRNA(n+1) + phosphate = tRNA(n) + a ribonucleoside 5'-diphosphate. In terms of biological role, phosphorolytic 3'-5' exoribonuclease that plays an important role in tRNA 3'-end maturation. Removes nucleotide residues following the 3'-CCA terminus of tRNAs; can also add nucleotides to the ends of RNA molecules by using nucleoside diphosphates as substrates, but this may not be physiologically important. Probably plays a role in initiation of 16S rRNA degradation (leading to ribosome degradation) during starvation. This Rickettsia africae (strain ESF-5) protein is Ribonuclease PH.